The primary structure comprises 339 residues: Fructose-1,6-bisphosphatase class 1 (339 aa).

Mg(2+) contacts are provided by E91, D113, L115, and D116. Substrate-binding positions include 116 to 119 (DGSS), N208, and K274. E280 lines the Mg(2+) pocket.

This sequence belongs to the FBPase class 1 family. Homotetramer. It depends on Mg(2+) as a cofactor.

The protein localises to the cytoplasm. The enzyme catalyses beta-D-fructose 1,6-bisphosphate + H2O = beta-D-fructose 6-phosphate + phosphate. It participates in carbohydrate biosynthesis; gluconeogenesis. In Cupriavidus pinatubonensis (strain JMP 134 / LMG 1197) (Cupriavidus necator (strain JMP 134)), this protein is Fructose-1,6-bisphosphatase class 1.